Here is a 162-residue protein sequence, read N- to C-terminus: UPF0260 protein CC_3276 (162 aa).

This sequence belongs to the UPF0260 family.

This Caulobacter vibrioides (strain ATCC 19089 / CIP 103742 / CB 15) (Caulobacter crescentus) protein is UPF0260 protein CC_3276.